Consider the following 267-residue polypeptide: 3-methyl-2-oxobutanoate hydroxymethyltransferase (267 aa).

Positions 45 and 84 each coordinate Mg(2+). 3-methyl-2-oxobutanoate contacts are provided by residues 45–46, D84, and K113; that span reads DS. E115 provides a ligand contact to Mg(2+). Residue E182 is the Proton acceptor of the active site.

Belongs to the PanB family. Homodecamer; pentamer of dimers. Mg(2+) serves as cofactor.

The protein localises to the cytoplasm. The catalysed reaction is 3-methyl-2-oxobutanoate + (6R)-5,10-methylene-5,6,7,8-tetrahydrofolate + H2O = 2-dehydropantoate + (6S)-5,6,7,8-tetrahydrofolate. It participates in cofactor biosynthesis; coenzyme A biosynthesis. In terms of biological role, catalyzes the reversible reaction in which hydroxymethyl group from 5,10-methylenetetrahydrofolate is transferred onto alpha-ketoisovalerate to form ketopantoate. The protein is 3-methyl-2-oxobutanoate hydroxymethyltransferase of Sulfurisphaera tokodaii (strain DSM 16993 / JCM 10545 / NBRC 100140 / 7) (Sulfolobus tokodaii).